Here is a 324-residue protein sequence, read N- to C-terminus: Probable cell division protein WhiA (324 aa).

The segment at residues 275-308 (SLEELGALADPPLTKDAIAGRIRRLIAMADRRAD) is a DNA-binding region (H-T-H motif).

Belongs to the WhiA family.

Its function is as follows. Involved in cell division and chromosome segregation. In Acidothermus cellulolyticus (strain ATCC 43068 / DSM 8971 / 11B), this protein is Probable cell division protein WhiA.